The chain runs to 355 residues: Probable cinnamyl alcohol dehydrogenase (355 aa).

Cys-47 serves as a coordination point for Zn(2+). Position 49 (Ser-49) interacts with NADP(+). Positions 69, 70, 100, 103, 106, 114, and 162 each coordinate Zn(2+). NADP(+) is bound by residues Thr-166, 187–192, 210–215, Thr-250, Gly-274, and 297–299; these read GLGGVG, SSSDKK, and SFI.

This sequence belongs to the zinc-containing alcohol dehydrogenase family. As to quaternary structure, homodimer. The cofactor is Zn(2+).

The enzyme catalyses (E)-cinnamyl alcohol + NADP(+) = (E)-cinnamaldehyde + NADPH + H(+). It carries out the reaction (E)-coniferol + NADP(+) = (E)-coniferaldehyde + NADPH + H(+). The catalysed reaction is (E)-sinapyl alcohol + NADP(+) = (E)-sinapaldehyde + NADPH + H(+). It catalyses the reaction (E)-4-coumaroyl alcohol + NADP(+) = (E)-4-coumaraldehyde + NADPH + H(+). The enzyme catalyses (E)-caffeyl alcohol + NADP(+) = (E)-caffeyl aldehyde + NADPH + H(+). It participates in aromatic compound metabolism; phenylpropanoid biosynthesis. Functionally, involved in lignin biosynthesis. Catalyzes the final step specific for the production of lignin monomers. Catalyzes the NADPH-dependent reduction of coniferaldehyde, 5-hydroxyconiferaldehyde, sinapaldehyde, 4-coumaraldehyde and caffeyl aldehyde to their respective alcohols. The sequence is that of Probable cinnamyl alcohol dehydrogenase (CAD1) from Eucalyptus botryoides (Southern mahogany).